Consider the following 304-residue polypeptide: Acetyl-coenzyme A carboxylase carboxyl transferase subunit beta (304 aa).

Positions 23–292 constitute a CoA carboxyltransferase N-terminal domain; it reads VWTKCDSCGQ…PNPEAPREGV (270 aa). Zn(2+)-binding residues include Cys-27, Cys-30, Cys-46, and Cys-49. The C4-type zinc finger occupies 27–49; sequence CDSCGQVLYRAELERNLEVCPKC. The disordered stretch occupies residues 284-304; that stretch reads NPEAPREGVVVPPVPDQEPEA. The segment covering 295 to 304 has biased composition (pro residues); the sequence is PPVPDQEPEA.

The protein belongs to the AccD/PCCB family. Acetyl-CoA carboxylase is a heterohexamer composed of biotin carboxyl carrier protein (AccB), biotin carboxylase (AccC) and two subunits each of ACCase subunit alpha (AccA) and ACCase subunit beta (AccD). Zn(2+) is required as a cofactor.

It localises to the cytoplasm. The enzyme catalyses N(6)-carboxybiotinyl-L-lysyl-[protein] + acetyl-CoA = N(6)-biotinyl-L-lysyl-[protein] + malonyl-CoA. It participates in lipid metabolism; malonyl-CoA biosynthesis; malonyl-CoA from acetyl-CoA: step 1/1. In terms of biological role, component of the acetyl coenzyme A carboxylase (ACC) complex. Biotin carboxylase (BC) catalyzes the carboxylation of biotin on its carrier protein (BCCP) and then the CO(2) group is transferred by the transcarboxylase to acetyl-CoA to form malonyl-CoA. The sequence is that of Acetyl-coenzyme A carboxylase carboxyl transferase subunit beta from Escherichia coli O6:K15:H31 (strain 536 / UPEC).